Here is a 134-residue protein sequence, read N- to C-terminus: Profilin-3 (134 aa).

Cys13 and Cys118 are disulfide-bonded. Residues 84-100 carry the Involved in PIP2 interaction motif; it reads AVIRGKKGSGGITIKKT.

Belongs to the profilin family. Occurs in many kinds of cells as a complex with monomeric actin in a 1:1 ratio. In terms of processing, phosphorylated by MAP kinases.

The protein resides in the cytoplasm. It localises to the cytoskeleton. Its function is as follows. Binds to actin and affects the structure of the cytoskeleton. At high concentrations, profilin prevents the polymerization of actin, whereas it enhances it at low concentrations. The polypeptide is Profilin-3 (Olea europaea (Common olive)).